Reading from the N-terminus, the 431-residue chain is Histidinol dehydrogenase (431 aa).

NAD(+)-binding residues include Tyr127, Gln189, and Asn212. Substrate is bound by residues Ser237, Gln259, and His262. Zn(2+) is bound by residues Gln259 and His262. Catalysis depends on proton acceptor residues Glu326 and His327. Substrate is bound by residues His327, Asp360, Glu414, and His419. Asp360 provides a ligand contact to Zn(2+). His419 is a binding site for Zn(2+).

The protein belongs to the histidinol dehydrogenase family. Requires Zn(2+) as cofactor.

It catalyses the reaction L-histidinol + 2 NAD(+) + H2O = L-histidine + 2 NADH + 3 H(+). The protein operates within amino-acid biosynthesis; L-histidine biosynthesis; L-histidine from 5-phospho-alpha-D-ribose 1-diphosphate: step 9/9. Catalyzes the sequential NAD-dependent oxidations of L-histidinol to L-histidinaldehyde and then to L-histidine. The sequence is that of Histidinol dehydrogenase from Xylella fastidiosa (strain Temecula1 / ATCC 700964).